The primary structure comprises 330 residues: Beta-ketoacyl-[acyl-carrier-protein] synthase III (330 aa).

Residues Cys-116 and His-257 contribute to the active site. Residues 258–262 (QANQR) are ACP-binding. Asn-287 is a catalytic residue.

This sequence belongs to the thiolase-like superfamily. FabH family. As to quaternary structure, homodimer.

The protein localises to the cytoplasm. It catalyses the reaction malonyl-[ACP] + acetyl-CoA + H(+) = 3-oxobutanoyl-[ACP] + CO2 + CoA. It participates in lipid metabolism; fatty acid biosynthesis. Its function is as follows. Catalyzes the condensation reaction of fatty acid synthesis by the addition to an acyl acceptor of two carbons from malonyl-ACP. Catalyzes the first condensation reaction which initiates fatty acid synthesis and may therefore play a role in governing the total rate of fatty acid production. Possesses both acetoacetyl-ACP synthase and acetyl transacylase activities. Its substrate specificity determines the biosynthesis of branched-chain and/or straight-chain of fatty acids. The sequence is that of Beta-ketoacyl-[acyl-carrier-protein] synthase III from Synechocystis sp. (strain ATCC 27184 / PCC 6803 / Kazusa).